The chain runs to 368 residues: 3-isopropylmalate dehydrogenase (368 aa).

Gly80–Glu93 is an NAD(+) binding site. The substrate site is built by Arg100, Arg110, Arg138, and Asp229. Residues Asp229, Asp253, and Asp257 each coordinate Mg(2+). Gly292–Asn304 contributes to the NAD(+) binding site.

This sequence belongs to the isocitrate and isopropylmalate dehydrogenases family. LeuB type 1 subfamily. As to quaternary structure, homodimer. It depends on Mg(2+) as a cofactor. The cofactor is Mn(2+).

The protein resides in the cytoplasm. The enzyme catalyses (2R,3S)-3-isopropylmalate + NAD(+) = 4-methyl-2-oxopentanoate + CO2 + NADH. Its pathway is amino-acid biosynthesis; L-leucine biosynthesis; L-leucine from 3-methyl-2-oxobutanoate: step 3/4. In terms of biological role, catalyzes the oxidation of 3-carboxy-2-hydroxy-4-methylpentanoate (3-isopropylmalate) to 3-carboxy-4-methyl-2-oxopentanoate. The product decarboxylates to 4-methyl-2 oxopentanoate. The sequence is that of 3-isopropylmalate dehydrogenase from Pelagibacter ubique (strain HTCC1062).